Consider the following 130-residue polypeptide: MSTLVSLPGATPAAAPDYQSLERPLNFTESAAAKVKSLIQEEGNPDLALRVYIEGGGCSGFQYGFEFDENRAEDDLAVQTSGVTLLVDPLSLQYLMGAEVDYTESLTGAQFVIRNPNAKTTCGCGSSFSM.

C58, C122, and C124 together coordinate iron-sulfur cluster.

It belongs to the HesB/IscA family. In terms of assembly, homodimer. It depends on iron-sulfur cluster as a cofactor.

Its function is as follows. Required for insertion of 4Fe-4S clusters for at least IspG. This is Iron-sulfur cluster insertion protein ErpA from Stenotrophomonas maltophilia (strain K279a).